We begin with the raw amino-acid sequence, 905 residues long: Stonin-2 (905 aa).

Disordered stretches follow at residues 1-121 (MTTL…HQET), 178-205 (EQTS…VEME), and 244-263 (LPPV…SVIP). Low complexity predominate over residues 40 to 50 (SSSPDQSESSS). The span at 60 to 73 (SQDHSHSEQDDSSE) shows a compositional bias: basic and acidic residues. Pro residues predominate over residues 85–94 (PGSPEQPPPD). Positions 178–196 (EQTSGQASGADSTDNSSSL) are enriched in polar residues. Pro residues predominate over residues 244-256 (LPPVTSPLKPNTP). At Thr255 the chain carries Phosphothreonine. 3 positions are modified to phosphoserine: Ser281, Ser287, and Ser302. 2 consecutive short sequence motifs (NPF) follow at residues 313–315 (NPF) and 329–331 (NPF). Residues 427-560 (GWPMMLRIPE…DLPVLSMDLS (134 aa)) enclose the SHD domain. Positions 568–878 (EEEITVDVRD…SYQVALGSIW (311 aa)) constitute an MHD domain. At Ser762 the chain carries Phosphoserine.

Belongs to the Stoned B family. In terms of assembly, interacts with the second C2 domain of synaptotagmins SYT1 and SYT2. Interacts with EPS15, EPS15R and ITSN1. Interacts indirectly with the AP-2 adapter complex. Interacts with TOR1A and COPS4; the interaction controls STON2 protein stability. In terms of processing, phosphorylated in vitro by PKD. Post-translationally, neddylated; deneddylated via its interaction with the COP9 signalosome (CSN) complex through TOR1A and COPS4. Ubiquitinated; leading to its degradation. In terms of tissue distribution, ubiquitous.

The protein resides in the cytoplasm. It localises to the membrane. The protein localises to the synapse. Its subcellular location is the synaptosome. Functionally, adapter protein involved in endocytic machinery. Involved in the synaptic vesicle recycling. May facilitate clathrin-coated vesicle uncoating. In Homo sapiens (Human), this protein is Stonin-2 (STON2).